The following is a 554-amino-acid chain: Inactive sesquithujene synthase B (554 aa).

2 residues coordinate Mg(2+): aspartate 308 and aspartate 312. Aspartate 308, aspartate 312, arginine 449, and asparagine 452 together coordinate substrate. The short motif at 308 to 312 (DDMFD) is the DDXXD motif element. Residues asparagine 452, serine 456, and glutamate 460 each coordinate Mg(2+).

Belongs to the terpene synthase family. In terms of assembly, monomer. Mg(2+) serves as cofactor. It depends on Mn(2+) as a cofactor.

Its subcellular location is the cytoplasm. Its pathway is secondary metabolite biosynthesis; terpenoid biosynthesis. Its function is as follows. Non-functional sesquiterpene synthase having less than 1% of the activity found in TPS5A. In Zea mays (Maize), this protein is Inactive sesquithujene synthase B.